The sequence spans 519 residues: O-fucosyltransferase 1 (519 aa).

The Cytoplasmic segment spans residues 1-24; sequence MRRLGHHRLHGKTGGVGTKGMVAK. The chain crosses the membrane as a helical; Signal-anchor for type II membrane protein span at residues 25–45; that stretch reads LSIGVIVLLICTLSLLFSANI. Residues 46-519 lie on the Lumenal side of the membrane; it reads GSNREPTRPS…TNSTVTGLER (474 aa). The interval 67–86 is disordered; it reads KSGGWRPSSAPRSDWPPPTK. The N-linked (GlcNAc...) asparagine glycan is linked to Asn118. Residue 260 to 262 participates in substrate binding; that stretch reads HLR. 3 N-linked (GlcNAc...) asparagine glycosylation sites follow: Asn327, Asn357, and Asn511. Residues 497-519 form a disordered region; it reads RLESIRDPDSTSQTNSTVTGLER. The span at 506-519 shows a compositional bias: polar residues; the sequence is STSQTNSTVTGLER.

This sequence belongs to the glycosyltransferase GT106 family.

It localises to the golgi apparatus membrane. Its pathway is glycan metabolism. This Arabidopsis thaliana (Mouse-ear cress) protein is O-fucosyltransferase 1.